A 331-amino-acid chain; its full sequence is Minor capsid protein A1 (331 aa).

Its subcellular location is the virion. Minor capsid protein. The chain is Minor capsid protein A1 from Escherichia coli (Bacteriophage SP).